The chain runs to 29 residues: NVQLDPFFQEQQQYYPQQQAFFLLQQQQN.

The chain is Prolamin alpha-1 from Dactylis glomerata (Orchard grass).